Here is a 294-residue protein sequence, read N- to C-terminus: Zinc finger protein CONSTANS-LIKE 3 (294 aa).

Residues C8, C11, C31, H36, C51, C54, C74, and H79 each contribute to the Zn(2+) site. The B box-type 1; atypical zinc-finger motif lies at 8–50; the sequence is CDSCKSTAATLFCRADAAFLCGDCDGKIHTANKLASRHERVWL. The segment at 51–93 adopts a B box-type 2; atypical zinc-finger fold; the sequence is CEVCEQAPAHVTCKADAAALCVTCDRDIHSANPLSRRHERVPI. In terms of domain architecture, CCT spans 229–271; that stretch reads REARVLRYREKRKNRKFEKTIRYASRKAYAEMRPRIKGRFAKR.

The protein belongs to the CONSTANS family.

Its subcellular location is the nucleus. The protein is Zinc finger protein CONSTANS-LIKE 3 (COL3) of Arabidopsis thaliana (Mouse-ear cress).